A 478-amino-acid polypeptide reads, in one-letter code: Cytochrome c-552 (478 aa).

Positions 1-26 (MTRIKINARRIFSLLIPFFFFTSVHA) are cleaved as a signal peptide. Histidine 94 serves as a coordination point for heme c. 3 residues coordinate heme: cysteine 122, cysteine 125, and lysine 126. Heme c contacts are provided by cysteine 160, cysteine 163, histidine 164, cysteine 209, cysteine 212, and histidine 213. Glutamate 215, tyrosine 216, lysine 261, and glutamine 263 together coordinate Ca(2+). Tyrosine 216 contributes to the substrate binding site. Residue histidine 264 coordinates substrate. Heme c is bound by residues histidine 275, cysteine 282, cysteine 285, histidine 286, histidine 301, cysteine 314, cysteine 317, histidine 318, and histidine 393.

The protein belongs to the cytochrome c-552 family. Requires Ca(2+) as cofactor. Heme c serves as cofactor.

The protein resides in the periplasm. The catalysed reaction is 6 Fe(III)-[cytochrome c] + NH4(+) + 2 H2O = 6 Fe(II)-[cytochrome c] + nitrite + 8 H(+). It functions in the pathway nitrogen metabolism; nitrate reduction (assimilation). Its function is as follows. Catalyzes the reduction of nitrite to ammonia, consuming six electrons in the process. This Escherichia coli O17:K52:H18 (strain UMN026 / ExPEC) protein is Cytochrome c-552.